The primary structure comprises 400 residues: Large envelope protein (400 aa).

Met1 carries the N-acetylmethionine modification. Disordered stretches follow at residues 1-53 (MGGW…DHWP), 88-118 (VPVA…SHPQ), and 145-169 (GSSS…SRTG). Residue Gly2 is the site of N-myristoyl glycine; by host attachment. Residues 2–119 (GGWSSKPRQG…PPLRDSHPQA (118 aa)) form a pre-S1 region. The segment at 2–174 (GGWSSKPRQG…SSRTGDPAPN (173 aa)) is pre-S. Residues 2-181 (GGWSSKPRQG…APNMENTTSG (180 aa)) are Virion surface; in external conformation-facing. At 2–253 (GGWSSKPRQG…PGYRWMCLRR (252 aa)) the chain is on the intravirion; in internal conformation side. Trp4 carries N-linked (GlcNAc...) asparagine glycosylation. Over residues 96–106 (STNRQSGRQPT) the composition is skewed to polar residues. Residues 120-174 (MQWNSTTFHQALLDPRVRGLYFPAGGSSSGTVNPVPTTASPISSISSRTGDPAPN) form a pre-S2 region. Residues 155–166 (PTTASPISSISS) are compositionally biased toward low complexity. A helical transmembrane segment spans residues 182–202 (FLGPLLVLQAGFFLLTRILTI). Residues 203 to 253 (PQSLDSWWTSLNFLGGAPTCPGQNSQSPTSNHSPTSCPPICPGYRWMCLRR) lie on the Intravirion; in external conformation side of the membrane. Residues 254-274 (FIIFLFILLLCLIFLLVLLDY) form a helical membrane-spanning segment. Residues 275–348 (QGMLPVCPLL…GASVRFSWLS (74 aa)) are Virion surface-facing. An N-linked (GlcNAc...) asparagine; by host glycan is attached at Asn320. A helical transmembrane segment spans residues 349 to 369 (LLVPFVQWFVGLSPTVWLSVI). Residues 370–375 (WMMWYW) lie on the Intravirion side of the membrane. Residues 376 to 398 (GPSLYNILSPFLPLLPIFFCLWV) traverse the membrane as a helical segment. At 399–400 (YI) the chain is on the virion surface side.

Belongs to the orthohepadnavirus major surface antigen family. In its internal form (Li-HBsAg), interacts with the capsid protein and with the isoform S. Interacts with host chaperone CANX. As to quaternary structure, associates with host chaperone CANX through its pre-S2 N glycan; this association may be essential for isoform M proper secretion. In terms of assembly, interacts with isoform L. Interacts with the antigens of satellite virus HDV (HDVAgs); this interaction is required for encapsidation of HDV genomic RNA. Isoform M is N-terminally acetylated by host at a ratio of 90%, and N-glycosylated by host at the pre-S2 region. Post-translationally, myristoylated.

Its subcellular location is the virion membrane. The large envelope protein exists in two topological conformations, one which is termed 'external' or Le-HBsAg and the other 'internal' or Li-HBsAg. In its external conformation the protein attaches the virus to cell receptors and thereby initiating infection. This interaction determines the species specificity and liver tropism. This attachment induces virion internalization predominantly through caveolin-mediated endocytosis. The large envelope protein also assures fusion between virion membrane and endosomal membrane. In its internal conformation the protein plays a role in virion morphogenesis and mediates the contact with the nucleocapsid like a matrix protein. Functionally, the middle envelope protein plays an important role in the budding of the virion. It is involved in the induction of budding in a nucleocapsid independent way. In this process the majority of envelope proteins bud to form subviral lipoprotein particles of 22 nm of diameter that do not contain a nucleocapsid. The protein is Large envelope protein of Hepatitis B virus genotype C subtype adr (strain Japan/adr4/1983) (HBV-C).